An 88-amino-acid chain; its full sequence is Small ribosomal subunit protein uS15 (88 aa).

This sequence belongs to the universal ribosomal protein uS15 family. In terms of assembly, part of the 30S ribosomal subunit. Forms a bridge to the 50S subunit in the 70S ribosome, contacting the 23S rRNA.

Its function is as follows. One of the primary rRNA binding proteins, it binds directly to 16S rRNA where it helps nucleate assembly of the platform of the 30S subunit by binding and bridging several RNA helices of the 16S rRNA. In terms of biological role, forms an intersubunit bridge (bridge B4) with the 23S rRNA of the 50S subunit in the ribosome. This is Small ribosomal subunit protein uS15 from Opitutus terrae (strain DSM 11246 / JCM 15787 / PB90-1).